The chain runs to 409 residues: Imidazolonepropionase (409 aa).

His-78 and His-80 together coordinate Fe(3+). 2 residues coordinate Zn(2+): His-78 and His-80. 4-imidazolone-5-propanoate contacts are provided by Arg-87, Tyr-150, and His-183. Tyr-150 provides a ligand contact to N-formimidoyl-L-glutamate. His-248 is a binding site for Fe(3+). His-248 serves as a coordination point for Zn(2+). Position 251 (Gln-251) interacts with 4-imidazolone-5-propanoate. Asp-323 lines the Fe(3+) pocket. A Zn(2+)-binding site is contributed by Asp-323. Positions 325 and 327 each coordinate N-formimidoyl-L-glutamate. Thr-328 lines the 4-imidazolone-5-propanoate pocket.

The protein belongs to the metallo-dependent hydrolases superfamily. HutI family. Zn(2+) is required as a cofactor. Fe(3+) serves as cofactor.

The protein localises to the cytoplasm. It carries out the reaction 4-imidazolone-5-propanoate + H2O = N-formimidoyl-L-glutamate. The protein operates within amino-acid degradation; L-histidine degradation into L-glutamate; N-formimidoyl-L-glutamate from L-histidine: step 3/3. Its function is as follows. Catalyzes the hydrolytic cleavage of the carbon-nitrogen bond in imidazolone-5-propanoate to yield N-formimidoyl-L-glutamate. It is the third step in the universal histidine degradation pathway. The chain is Imidazolonepropionase from Mesorhizobium japonicum (strain LMG 29417 / CECT 9101 / MAFF 303099) (Mesorhizobium loti (strain MAFF 303099)).